The following is a 130-amino-acid chain: Small ribosomal subunit protein eS6 (130 aa).

The disordered stretch occupies residues 78–98; that stretch reads SGPPGFRPERKGERRRKTVRG.

The protein belongs to the eukaryotic ribosomal protein eS6 family.

This is Small ribosomal subunit protein eS6 from Methanopyrus kandleri (strain AV19 / DSM 6324 / JCM 9639 / NBRC 100938).